A 188-amino-acid chain; its full sequence is Peptidyl-tRNA hydrolase (188 aa).

Y14 is a binding site for tRNA. H19 serves as the catalytic Proton acceptor. TRNA contacts are provided by Y64, N66, and N113.

The protein belongs to the PTH family. As to quaternary structure, monomer.

Its subcellular location is the cytoplasm. The catalysed reaction is an N-acyl-L-alpha-aminoacyl-tRNA + H2O = an N-acyl-L-amino acid + a tRNA + H(+). Functionally, hydrolyzes ribosome-free peptidyl-tRNAs (with 1 or more amino acids incorporated), which drop off the ribosome during protein synthesis, or as a result of ribosome stalling. Its function is as follows. Catalyzes the release of premature peptidyl moieties from peptidyl-tRNA molecules trapped in stalled 50S ribosomal subunits, and thus maintains levels of free tRNAs and 50S ribosomes. This Chloroflexus aurantiacus (strain ATCC 29364 / DSM 637 / Y-400-fl) protein is Peptidyl-tRNA hydrolase.